A 222-amino-acid chain; its full sequence is Putative germin-like protein subfamily 1 member 9 (222 aa).

An N-terminal signal peptide occupies residues 1–22 (MKSFSFLAVLSILAITLSLSKA). An intrachain disulfide couples cysteine 32 to cysteine 49. The region spanning 63–213 (TGLHEARPPN…AFQVDPKIVM (151 aa)) is the Cupin type-1 domain. N-linked (GlcNAc...) asparagine glycosylation is present at asparagine 78. Residues histidine 111, histidine 113, glutamate 118, and histidine 159 each coordinate Mn(2+).

Belongs to the germin family. As to quaternary structure, oligomer (believed to be a pentamer but probably hexamer).

It is found in the secreted. The protein localises to the extracellular space. The protein resides in the apoplast. In terms of biological role, may play a role in plant defense. Probably has no oxalate oxidase activity even if the active site is conserved. In Arabidopsis thaliana (Mouse-ear cress), this protein is Putative germin-like protein subfamily 1 member 9.